Here is a 691-residue protein sequence, read N- to C-terminus: Protein 4.2 (691 aa).

Gly2 is lipidated: N-myristoyl glycine. The interval 31–39 (LFVRRGQPF) is band 3 binding. Ser248 bears the Phosphoserine; by PKA mark.

This sequence belongs to the transglutaminase superfamily. Transglutaminase family. As to quaternary structure, component of the ankyrin-1 complex in the erythrocyte, composed of ANK1, RHCE, RHAG, SLC4A1, EPB42, GYPA, GYPB and AQP1. Interacts with SLC4A1 (via the cytoplasmic domain); this interaction is mediated by the SLC4A1 Band 3-I dimer. Interacts with ANK1 (via ANK 1-13 repeats). Interacts with AQP1 (via the C-terminal). Both cAMP-dependent kinase (CAPK) and another kinase present in the red-blood cells seem to be able to phosphorylate EPB42.

The protein resides in the cell membrane. Its subcellular location is the cytoplasm. The protein localises to the cytoskeleton. In terms of biological role, component of the ankyrin-1 complex, a multiprotein complex involved in the stability and shape of the erythrocyte membrane. The polypeptide is Protein 4.2 (Homo sapiens (Human)).